Here is a 362-residue protein sequence, read N- to C-terminus: Probable dual-specificity RNA methyltransferase RlmN (362 aa).

Glu-91 functions as the Proton acceptor in the catalytic mechanism. A Radical SAM core domain is found at 97–329 (QHYGLSVCVT…KKNGVNCVVR (233 aa)). An intrachain disulfide couples Cys-104 to Cys-340. Cys-111, Cys-115, and Cys-118 together coordinate [4Fe-4S] cluster. Residues 163–164 (GE), Ser-195, 218–220 (SLH), and Asn-296 contribute to the S-adenosyl-L-methionine site. The active-site S-methylcysteine intermediate is the Cys-340.

This sequence belongs to the radical SAM superfamily. RlmN family. [4Fe-4S] cluster serves as cofactor.

The protein localises to the cytoplasm. The enzyme catalyses adenosine(2503) in 23S rRNA + 2 reduced [2Fe-2S]-[ferredoxin] + 2 S-adenosyl-L-methionine = 2-methyladenosine(2503) in 23S rRNA + 5'-deoxyadenosine + L-methionine + 2 oxidized [2Fe-2S]-[ferredoxin] + S-adenosyl-L-homocysteine. The catalysed reaction is adenosine(37) in tRNA + 2 reduced [2Fe-2S]-[ferredoxin] + 2 S-adenosyl-L-methionine = 2-methyladenosine(37) in tRNA + 5'-deoxyadenosine + L-methionine + 2 oxidized [2Fe-2S]-[ferredoxin] + S-adenosyl-L-homocysteine. In terms of biological role, specifically methylates position 2 of adenine 2503 in 23S rRNA and position 2 of adenine 37 in tRNAs. This Streptococcus sanguinis (strain SK36) protein is Probable dual-specificity RNA methyltransferase RlmN.